The chain runs to 1014 residues: Probable transport protein MmpL11 (1014 aa).

Transmembrane regions (helical) follow at residues 13 to 33 (WLVF…AMTQ), 156 to 173 (VRLY…VAAN), 188 to 208 (IILI…VPLA), 235 to 255 (TSTV…FILM), 279 to 299 (GLAV…IYLI), 311 to 331 (AILA…AALA), 373 to 393 (ASAA…MMLG), 530 to 550 (TEPL…LISI), 560 to 580 (VLMT…VFQW), 598 to 618 (VPPL…IFLL), 649 to 669 (AALI…PLVA), and 671 to 691 (IGVA…LVLV). Residues 783–802 (SDRVLPGAATQESEEDPAMG) form a disordered region.

It belongs to the resistance-nodulation-cell division (RND) (TC 2.A.6) family. MmpL subfamily.

Its subcellular location is the cell membrane. The protein is Probable transport protein MmpL11 (mmpL11) of Mycobacterium leprae (strain TN).